Consider the following 1400-residue polypeptide: DNA-directed RNA polymerase subunit beta' (1400 aa).

Positions 70, 72, 85, and 88 each coordinate Zn(2+). Mg(2+) is bound by residues Asp460, Asp462, and Asp464. 4 residues coordinate Zn(2+): Cys814, Cys888, Cys895, and Cys898.

Belongs to the RNA polymerase beta' chain family. In terms of assembly, the RNAP catalytic core consists of 2 alpha, 1 beta, 1 beta' and 1 omega subunit. When a sigma factor is associated with the core the holoenzyme is formed, which can initiate transcription. The cofactor is Mg(2+). Requires Zn(2+) as cofactor.

The catalysed reaction is RNA(n) + a ribonucleoside 5'-triphosphate = RNA(n+1) + diphosphate. Functionally, DNA-dependent RNA polymerase catalyzes the transcription of DNA into RNA using the four ribonucleoside triphosphates as substrates. This Vibrio vulnificus (strain CMCP6) protein is DNA-directed RNA polymerase subunit beta'.